The following is a 436-amino-acid chain: 3-ketoacyl-CoA thiolase (436 aa).

C99 serves as the catalytic Acyl-thioester intermediate. Residues H392 and C422 each act as proton acceptor in the active site.

Belongs to the thiolase-like superfamily. Thiolase family. In terms of assembly, heterotetramer of two alpha chains (FadJ) and two beta chains (FadI).

It is found in the cytoplasm. The catalysed reaction is an acyl-CoA + acetyl-CoA = a 3-oxoacyl-CoA + CoA. Its pathway is lipid metabolism; fatty acid beta-oxidation. Its function is as follows. Catalyzes the final step of fatty acid oxidation in which acetyl-CoA is released and the CoA ester of a fatty acid two carbons shorter is formed. This is 3-ketoacyl-CoA thiolase from Shewanella woodyi (strain ATCC 51908 / MS32).